The following is a 468-amino-acid chain: Bone morphogenetic protein 3 (468 aa).

Residues 1–22 (MAGARGLLCLWLGYFCLNLAQG) form the signal peptide. The propeptide occupies 23 to 358 (QRPNLHLPGL…EQTLKKARRK (336 aa)). The tract at residues 29 to 53 (LPGLRETEPSDRATGGSPSPDLRPH) is disordered. Asn-115, Asn-139, Asn-171, and Asn-216 each carry an N-linked (GlcNAc...) asparagine glycan. The tract at residues 314-349 (RKPYKSLQTQPPEKSRNKKKQRKGSHQKGQTLQFDE) is disordered. Over residues 329-339 (RNKKKQRKGSH) the composition is skewed to basic residues. Residues 340–349 (QKGQTLQFDE) show a composition bias toward polar residues. 3 cysteine pairs are disulfide-bonded: Cys-366–Cys-433, Cys-395–Cys-465, and Cys-399–Cys-467. Residue Asn-459 is glycosylated (N-linked (GlcNAc...) asparagine).

Belongs to the TGF-beta family. As to quaternary structure, homodimer; disulfide-linked.

It is found in the secreted. Negatively regulates bone density. Antagonizes the ability of certain osteogenic BMPs to induce osteoprogenitor differentiation and ossification. The polypeptide is Bone morphogenetic protein 3 (Bmp3) (Mus musculus (Mouse)).